Consider the following 691-residue polypeptide: POU domain, class 6, transcription factor 2 (691 aa).

3 disordered regions span residues 1–61 (MIAG…RGNT), 188–297 (QQQQ…LQLV), and 435–461 (GQAATSHSPVRQASSSSSSSSSSSALS). Positions 17 to 28 (MNAELRGEDKAA) are enriched in basic and acidic residues. Low complexity-rich tracts occupy residues 188–197 (QQQQQQQQQQ) and 206–216 (QHPQPASQAPP). Over residues 217-237 (QSQPTPPHQPPPASQQLPAPP) the composition is skewed to pro residues. Over residues 238–272 (AQLEQATQPQQHQPHSHPQNQTQNQPSPTQQSSSP) the composition is skewed to low complexity. Residues 437 to 447 (AATSHSPVRQA) show a composition bias toward polar residues. A compositionally biased stretch (low complexity) spans 448–458 (SSSSSSSSSSS). The POU-specific domain occupies 476–586 (VDGVNLEEIR…VLERWMAEAE (111 aa)). Positions 607–666 (KRKRRTSFTPQALEILNAHFEKNTHPSGQEMTEIAEKLNYDREVVRVWFCNKRQALKNTI) form a DNA-binding region, homeobox. Residues 670 to 691 (KQHEPTSAAPLEPLADSPEENC) form a disordered region.

This sequence belongs to the POU transcription factor family. Class-6 subfamily. In terms of tissue distribution, expressed in kidney, heart, muscle, spleen and ovary, but not in lung.

The protein localises to the nucleus. In terms of biological role, probable transcription factor likely to be involved in early steps in the differentiation of amacrine and ganglion cells. Recognizes and binds to the DNA sequence 5'-ATGCAAAT-3'. In Mus musculus (Mouse), this protein is POU domain, class 6, transcription factor 2 (Pou6f2).